The sequence spans 160 residues: CXXC motif containing zinc binding protein (160 aa).

The Zn(2+) site is built by cysteine 33, cysteine 36, cysteine 67, and cysteine 70. Serine 75 bears the Phosphoserine mark.

The protein belongs to the UPF0587 family. As to quaternary structure, monomer.

This Homo sapiens (Human) protein is CXXC motif containing zinc binding protein.